We begin with the raw amino-acid sequence, 807 residues long: uncharacterized protein (807 aa).

It belongs to the IIV-6 155L family.

This is an uncharacterized protein from Aedes vexans (Inland floodwater mosquito).